Reading from the N-terminus, the 281-residue chain is NADPH-dependent 7-cyano-7-deazaguanine reductase (281 aa).

Residue 86–88 (IES) coordinates substrate. An NADPH-binding site is contributed by 88–89 (SK). Catalysis depends on cysteine 189, which acts as the Thioimide intermediate. Aspartate 196 serves as the catalytic Proton donor. 228-229 (HE) serves as a coordination point for substrate. 257–258 (RG) serves as a coordination point for NADPH.

Belongs to the GTP cyclohydrolase I family. QueF type 2 subfamily. In terms of assembly, homodimer.

The protein resides in the cytoplasm. It carries out the reaction 7-aminomethyl-7-carbaguanine + 2 NADP(+) = 7-cyano-7-deazaguanine + 2 NADPH + 3 H(+). Its pathway is tRNA modification; tRNA-queuosine biosynthesis. Its function is as follows. Catalyzes the NADPH-dependent reduction of 7-cyano-7-deazaguanine (preQ0) to 7-aminomethyl-7-deazaguanine (preQ1). The sequence is that of NADPH-dependent 7-cyano-7-deazaguanine reductase from Mannheimia succiniciproducens (strain KCTC 0769BP / MBEL55E).